Consider the following 497-residue polypeptide: tRNA-2-methylthio-N(6)-dimethylallyladenosine synthase (497 aa).

The segment covering 1 to 10 (MTLLDSDSRQ) has biased composition (basic and acidic residues). The segment at 1–26 (MTLLDSDSRQSAEVLPAAGPAPDRPR) is disordered. Positions 26 to 142 (RTYQVRTFGC…LPVLLERARI (117 aa)) constitute an MTTase N-terminal domain. Cys-35, Cys-71, Cys-105, Cys-179, Cys-183, and Cys-186 together coordinate [4Fe-4S] cluster. Residues 165-395 (RESVYAAWVA…VALVEQIALE (231 aa)) form the Radical SAM core domain. One can recognise a TRAM domain in the interval 398-464 (QAQVGRVVEV…PHCLIADQVL (67 aa)).

The protein belongs to the methylthiotransferase family. MiaB subfamily. As to quaternary structure, monomer. The cofactor is [4Fe-4S] cluster.

It localises to the cytoplasm. The catalysed reaction is N(6)-dimethylallyladenosine(37) in tRNA + (sulfur carrier)-SH + AH2 + 2 S-adenosyl-L-methionine = 2-methylsulfanyl-N(6)-dimethylallyladenosine(37) in tRNA + (sulfur carrier)-H + 5'-deoxyadenosine + L-methionine + A + S-adenosyl-L-homocysteine + 2 H(+). Functionally, catalyzes the methylthiolation of N6-(dimethylallyl)adenosine (i(6)A), leading to the formation of 2-methylthio-N6-(dimethylallyl)adenosine (ms(2)i(6)A) at position 37 in tRNAs that read codons beginning with uridine. The chain is tRNA-2-methylthio-N(6)-dimethylallyladenosine synthase from Acidothermus cellulolyticus (strain ATCC 43068 / DSM 8971 / 11B).